The chain runs to 285 residues: Nucleotide-binding protein in ptsN-ptsO intergenic region (285 aa).

8–15 is an ATP binding site; it reads GRSGSGKS. A GTP-binding site is contributed by 60–63; it reads DARN.

This sequence belongs to the RapZ-like family.

Functionally, displays ATPase and GTPase activities. This is Nucleotide-binding protein in ptsN-ptsO intergenic region from Stutzerimonas stutzeri (Pseudomonas stutzeri).